Here is a 241-residue protein sequence, read N- to C-terminus: Ureidoacrylate amidohydrolase RutB (241 aa).

D38 functions as the Proton acceptor in the catalytic mechanism. Residue K147 is part of the active site. The active-site Nucleophile is C180.

This sequence belongs to the isochorismatase family. RutB subfamily.

The enzyme catalyses (Z)-3-ureidoacrylate + H2O + H(+) = (Z)-3-aminoacrylate + NH4(+) + CO2. It carries out the reaction (Z)-3-ureidoacrylate + H2O = (Z)-3-aminoacrylate + carbamate + H(+). It catalyses the reaction (Z)-2-methylureidoacrylate + H2O + H(+) = (Z)-2-methylaminoacrylate + NH4(+) + CO2. Functionally, hydrolyzes ureidoacrylate to form aminoacrylate and carbamate. The carbamate hydrolyzes spontaneously, thereby releasing one of the nitrogen atoms of the pyrimidine ring as ammonia and one of its carbon atoms as CO2. The chain is Ureidoacrylate amidohydrolase RutB from Haliangium ochraceum (strain DSM 14365 / JCM 11303 / SMP-2).